The following is a 186-amino-acid chain: Translation initiation factor IF-3 (186 aa).

Positions Met1–Leu20 are disordered.

This sequence belongs to the IF-3 family. As to quaternary structure, monomer.

The protein localises to the cytoplasm. In terms of biological role, IF-3 binds to the 30S ribosomal subunit and shifts the equilibrium between 70S ribosomes and their 50S and 30S subunits in favor of the free subunits, thus enhancing the availability of 30S subunits on which protein synthesis initiation begins. The chain is Translation initiation factor IF-3 from Borrelia hermsii (strain HS1 / DAH).